The chain runs to 164 residues: Protein SprT (164 aa).

A SprT-like domain is found at 13–156 (YQQAEAFFKR…LCKRCREILV (144 aa)). Zn(2+) is bound at residue His69. Residue Glu70 is part of the active site. His73 is a Zn(2+) binding site.

This sequence belongs to the SprT family. It depends on Zn(2+) as a cofactor.

The protein localises to the cytoplasm. In Pseudomonas putida (strain ATCC 700007 / DSM 6899 / JCM 31910 / BCRC 17059 / LMG 24140 / F1), this protein is Protein SprT.